The following is an 878-amino-acid chain: MLYRLLSIVQRQRTSPGWQTWSSARSSTSTAEAHSIALPAQAQVVICGGGIMGTSVAYHLSKMGWQDIVLLEQGRLAAGSTRFCAGILSTARHSSVEQKMANYSNKLYHQLEQETGIQTGYLRTGSISLAQTQDRLISLKRINSRLNVVGIPSEIISPKKVAELHPLLNVHDLVGAMYVPEDAVVSSADVALALASAASQNGVQIYDRTSVLHVLIKKGQVTGVETDKGQIECQYFVNCAGQWAYELGLSNEEPLSIPLHACEHFYLLTRPWDTPLQSNTPTIVDADGRIYIRNWQGGILSGGFEKNPKPIFTEGKNQLEIQNLREDWDHFEPLLSSLLRRMPALETLEILKLVNCPETFTPDMKCIMGESPVVQGYFVLAGMNSAGLSLGGGAGKFLAEWMVYGYPSENVWELDLQRFGALQSSRTFLRHRVMEVMPLIYDLKVPRWDFQTGRQLRTSPLYDRLDAQGARWMEKHGFERPKYFVPPNKDLLALEQSKTFYKPDWFDIVESEVKCCKEAVCVIDMSSFTKFEITSTGDEALESLQYLFCNDLDVPVGHIVHTGMLNEYGGYENDCSIARLTKRSFFMISPTDQQVHCWAWLNKYLPKDSNLLLEDVTWKYTALNLIGPRAVDVLSELSYAPMTPDHFPTLFCKEMSVGYANGIRVMSMTHTGEPGFMLYIPIEYALHVYNEVMSVGQKYGIRNAGYYALRSLRIEKFFAFWGQDLNTLTTPLECGGESRVKLEKGIDFIGRDALLQQKQTGVYKRLAMFILDDHDTDLDLWPWWGEPIYRNGKYAGKTTSSAYSYTLERHVCLGYVHNFSEDSGEEQVVTTDFINRGEYEIDIAGHRFQAKAKLYPVTSFFTHKRRKDDVELSDFHGK.

The transit peptide at 1–93 (MLYRLLSIVQ…CAGILSTARH (93 aa)) directs the protein to the mitochondrion.

Belongs to the GcvT family. In terms of assembly, heterodimer of a catalytic (PDP1) and a regulatory (PDPR) subunit.

It localises to the mitochondrion matrix. In terms of biological role, decreases the sensitivity of PDP1 to magnesium ions, and this inhibition is reversed by the polyamine spermine. This chain is Pyruvate dehydrogenase phosphatase regulatory subunit, mitochondrial (Pdpr), found in Mus musculus (Mouse).